The primary structure comprises 247 residues: Acyl-coenzyme A thioesterase THEM5 (247 aa).

D167 functions as the Proton donor/acceptor in the catalytic mechanism.

The protein belongs to the THEM4/THEM5 thioesterase family. Homodimer.

The protein localises to the mitochondrion matrix. The catalysed reaction is hexadecanoyl-CoA + H2O = hexadecanoate + CoA + H(+). It catalyses the reaction (9Z,12Z)-octadecadienoyl-CoA + H2O = (9Z,12Z)-octadecadienoate + CoA + H(+). It carries out the reaction tetradecanoyl-CoA + H2O = tetradecanoate + CoA + H(+). The enzyme catalyses (9Z)-octadecenoyl-CoA + H2O = (9Z)-octadecenoate + CoA + H(+). The catalysed reaction is (9Z)-hexadecenoyl-CoA + H2O = (9Z)-hexadecenoate + CoA + H(+). It catalyses the reaction (5Z,8Z,11Z,14Z)-eicosatetraenoyl-CoA + H2O = (5Z,8Z,11Z,14Z)-eicosatetraenoate + CoA + H(+). It carries out the reaction octadecanoyl-CoA + H2O = octadecanoate + CoA + H(+). Has acyl-CoA thioesterase activity towards long-chain (C16 and C18) fatty acyl-CoA substrates, with a preference for linoleoyl-CoA and other unsaturated long-chain fatty acid-CoA esters. Plays an important role in mitochondrial fatty acid metabolism, and in remodeling of the mitochondrial lipid cardiolipin. Required for normal mitochondrial function. This is Acyl-coenzyme A thioesterase THEM5 (THEM5) from Homo sapiens (Human).